Here is a 99-residue protein sequence, read N- to C-terminus: Carboxysome shell vertex protein CcmL (99 aa).

A BMV domain is found at 1–83 (MKIARVCGTV…IDAAVVAIID (83 aa)).

The protein belongs to the CcmL/EutN family. CcmL subfamily. Homopentamer. May interact with CcmK2, this occurs at very high CcmK2 concentrations. Interacts with full-length CcmM.

It localises to the carboxysome. Probably forms vertices in the carboxysome, a polyhedral inclusion where RuBisCO (ribulose bisphosphate carboxylase, rbcL-rbcS) is sequestered. Has been modeled to induce curvature upon insertion into an otherwise flat hexagonal molecular layer of CcmK subunits. The sequence is that of Carboxysome shell vertex protein CcmL from Thermosynechococcus vestitus (strain NIES-2133 / IAM M-273 / BP-1).